The following is a 51-amino-acid chain: uncharacterized protein (51 aa).

A helical membrane pass occupies residues 10–29 (LFLYHPLFLLLLYIYLVLFI).

It localises to the plastid. The protein localises to the chloroplast membrane. This is an uncharacterized protein from Anthoceros angustus (Hornwort).